The chain runs to 72 residues: ATP synthase subunit c (72 aa).

2 helical membrane passes run 1–21 and 48–68; these read MSLG…GAGI and MFIG…FSFI.

Belongs to the ATPase C chain family. F-type ATPases have 2 components, F(1) - the catalytic core - and F(0) - the membrane proton channel. F(1) has five subunits: alpha(3), beta(3), gamma(1), delta(1), epsilon(1). F(0) has three main subunits: a(1), b(2) and c(10-14). The alpha and beta chains form an alternating ring which encloses part of the gamma chain. F(1) is attached to F(0) by a central stalk formed by the gamma and epsilon chains, while a peripheral stalk is formed by the delta and b chains.

The protein localises to the cell membrane. F(1)F(0) ATP synthase produces ATP from ADP in the presence of a proton or sodium gradient. F-type ATPases consist of two structural domains, F(1) containing the extramembraneous catalytic core and F(0) containing the membrane proton channel, linked together by a central stalk and a peripheral stalk. During catalysis, ATP synthesis in the catalytic domain of F(1) is coupled via a rotary mechanism of the central stalk subunits to proton translocation. In terms of biological role, key component of the F(0) channel; it plays a direct role in translocation across the membrane. A homomeric c-ring of between 10-14 subunits forms the central stalk rotor element with the F(1) delta and epsilon subunits. This is ATP synthase subunit c from Bacillus caldotenax.